The primary structure comprises 141 residues: Hemoglobin subunit alpha (141 aa).

Residues 1–141 (VLSGTDKSNI…VSTVLTSKYR (141 aa)) enclose the Globin domain. Serine 3 carries the post-translational modification Phosphoserine. N6-succinyllysine is present on residues lysine 7 and lysine 11. Lysine 16 carries the N6-acetyllysine; alternate modification. At lysine 16 the chain carries N6-succinyllysine; alternate. Tyrosine 24 bears the Phosphotyrosine mark. Serine 35 is subject to Phosphoserine. The residue at position 40 (lysine 40) is an N6-succinyllysine. A Phosphoserine modification is found at serine 49. Histidine 58 is an O2 binding site. Histidine 87 contacts heme b. Serine 102 bears the Phosphoserine mark. Position 108 is a phosphothreonine (threonine 108). Residue serine 124 is modified to Phosphoserine. Residues threonine 134 and threonine 137 each carry the phosphothreonine modification. Serine 138 carries the phosphoserine modification.

This sequence belongs to the globin family. In terms of assembly, heterotetramer of two alpha chains and two beta chains. As to expression, red blood cells.

Its function is as follows. Involved in oxygen transport from the lung to the various peripheral tissues. In terms of biological role, hemopressin acts as an antagonist peptide of the cannabinoid receptor CNR1. Hemopressin-binding efficiently blocks cannabinoid receptor CNR1 and subsequent signaling. The polypeptide is Hemoglobin subunit alpha (HBA) (Talpa europaea (European mole)).